A 273-amino-acid chain; its full sequence is Sulfur carrier protein FdhD (273 aa).

Cys-124 acts as the Cysteine persulfide intermediate in catalysis. 263 to 268 (FCRQSR) provides a ligand contact to Mo-bis(molybdopterin guanine dinucleotide).

Belongs to the FdhD family.

The protein resides in the cytoplasm. Functionally, required for formate dehydrogenase (FDH) activity. Acts as a sulfur carrier protein that transfers sulfur from IscS to the molybdenum cofactor prior to its insertion into FDH. This chain is Sulfur carrier protein FdhD, found in Acinetobacter baylyi (strain ATCC 33305 / BD413 / ADP1).